A 654-amino-acid chain; its full sequence is Endoplasmic reticulum chaperone BiP (654 aa).

Positions 1–18 (MKLSLVAAMLLLLSAARA) are cleaved as a signal peptide. The interval 1–80 (MKLSLVAAML…EGERLIGDAA (80 aa)) is required for interaction with ELAPOR1. ATP is bound at residue 36-39 (GTTY). Serine 86 is modified (phosphoserine). ATP is bound at residue lysine 96. Lysine 125 bears the N6-acetyllysine mark. Residues 125–280 (KPYIQVDIGG…KKKTGKDVRK (156 aa)) are nucleotide-binding (NBD). A 3'-nitrotyrosine modification is found at tyrosine 160. Lysine 213 carries the post-translational modification N6-acetyllysine. 227-229 (GGT) is an ATP binding site. At lysine 271 the chain carries N6-acetyllysine. 293–300 (EKAKRALS) contributes to the ATP binding site. N6-acetyllysine is present on lysine 326. Residue lysine 352 forms a Glycyl lysine isopeptide (Lys-Gly) (interchain with G-Cter in SUMO2) linkage. Residue lysine 353 is modified to N6-acetyllysine; alternate. Lysine 353 participates in a covalent cross-link: Glycyl lysine isopeptide (Lys-Gly) (interchain with G-Cter in SUMO1); alternate. Residue 364 to 367 (GSTR) coordinates ATP. Residues 409–419 (QDTGDLALLDV) are interdomain linker. The segment at 420–500 (CPLTLGIETV…PRGVPQIEVT (81 aa)) is substrate-binding (SBD). N6-succinyllysine is present on lysine 447. An Omega-N-methylarginine modification is found at arginine 492. Position 518 is an O-AMP-threonine; alternate (threonine 518). At threonine 518 the chain carries Phosphothreonine; alternate. Lysine 585 bears the N6,N6,N6-trimethyllysine; by METTL21A; in vitro mark. Residue lysine 585 is modified to N6,N6-dimethyllysine; alternate. Lysine 585 carries the post-translational modification N6-methyllysine; alternate. Lysine 591 is subject to N6-methyllysine. Residues 633–654 (KLYGSAGPPPTGEEDTAEKDEL) form a disordered region. A phosphothreonine mark is found at threonine 643 and threonine 648. A compositionally biased stretch (acidic residues) spans 644–654 (GEEDTAEKDEL). Residues 651–654 (KDEL) carry the Prevents secretion from ER motif.

Belongs to the heat shock protein 70 family. As to quaternary structure, monomer and homooligomer; homooligomerization via the interdomain linker inactivates the chaperone activity and acts as a storage of HSPA5/BiP molecules. Interacts with DNAJC1 (via J domain). Component of an EIF2 complex at least composed of CELF1/CUGBP1, CALR, CALR3, EIF2S1, EIF2S2, HSP90B1 and HSPA5. Part of a large chaperone multiprotein complex comprising DNAJB11, HSP90B1, HSPA5, HYOU, PDIA2, PDIA4, PDIA6, PPIB, SDF2L1, UGGT1 and very small amounts of ERP29, but not, or at very low levels, CALR nor CANX. Interacts with TMEM132A and TRIM21. May form a complex with ERLEC1, OS9, SEL1L and SYVN1. Interacts with DNAJC10. Interacts with DNAJB9/ERdj4; leading to recruit HSPA5/BiP to ERN1/IRE1. Interacts with ERN1/IRE1 (via luminal domain); the interaction takes place following interaction with DNAJB9/ERdj4 and leads to inactivate ERN1/IRE1, the interaction also competitively inhibits ERN1 interaction with MANF. Interacts directly with MANF (via SAP domain); the interaction inhibits ATP binding to HSPA5/BiP and subsequent nucleotide exchange. Interacts with EIF2AK3/PERK (via luminal domain); interaction leads to inactivate EIF2AK3/PERK. Interacts with MX1. Interacts with METTL23. Interacts with CEMIP; the interaction induces calcium leakage from the endoplasmic reticulum and cell migration. Interacts with PCSK4 form; the interaction takes place in the endoplasmic reticulum. Interacts with CIPC. Interacts with CCDC88B (via C-terminus); the interaction opposes ERN1-mediated JNK activation, protecting against apoptosis. Interacts with INPP5K; necessary for INPP5K localization at the endoplasmic reticulum. Interacts with MANF; the interaction is direct. Interacts with LOXL2; leading to activate the ERN1/IRE1-XBP1 pathway of the unfolded protein response. Interacts with CLU under stressed condition; interaction increases CLU protein stability; facilitates its retrotranslocation and redistribution to the mitochondria; cooperatively suppress stress-induced apoptosis by stabilizing mitochondrial membrane integrity. Interacts with CCDC47. Interacts with CLN3. Interacts with ELAPOR1; may regulate the function of HSPA5 in apoptosis and cell proliferation. Interacts with CASP7. Interacts with ILDR2; the interaction stabilizes ILDR2 expression. Interacts with ADAM7. Post-translationally, in unstressed cells, AMPylation at Thr-518 by FICD inactivates the chaperome activity: AMPylated form is locked in a relatively inert state and only weakly stimulated by J domain-containing proteins. In response to endoplasmic reticulum stress, de-AMPylation by the same protein, FICD, restores the chaperone activity.

Its subcellular location is the endoplasmic reticulum lumen. The protein localises to the melanosome. It localises to the cytoplasm. The protein resides in the cell surface. The catalysed reaction is ATP + H2O = ADP + phosphate + H(+). Its activity is regulated as follows. The chaperone activity is regulated by ATP-induced allosteric coupling of the nucleotide-binding (NBD) and substrate-binding (SBD) domains. In the ADP-bound and nucleotide-free (apo) states, the two domains have little interaction. In contrast, in the ATP-bound state the two domains are tightly coupled, which results in drastically accelerated kinetics in both binding and release of polypeptide substrates. J domain-containing co-chaperones (DNAJB9/ERdj4 or DNAJC10/ERdj5) stimulate the ATPase activity and are required for efficient substrate recognition by HSPA5/BiP. Homooligomerization inactivates participating HSPA5/BiP protomers and probably act as reservoirs to store HSPA5/BiP molecules when they are not needed by the cell. Its function is as follows. Endoplasmic reticulum chaperone that plays a key role in protein folding and quality control in the endoplasmic reticulum lumen. Involved in the correct folding of proteins and degradation of misfolded proteins via its interaction with DNAJC10/ERdj5, probably to facilitate the release of DNAJC10/ERdj5 from its substrate. Acts as a key repressor of the EIF2AK3/PERK and ERN1/IRE1-mediated unfolded protein response (UPR). In the unstressed endoplasmic reticulum, recruited by DNAJB9/ERdj4 to the luminal region of ERN1/IRE1, leading to disrupt the dimerization of ERN1/IRE1, thereby inactivating ERN1/IRE1. Also binds and inactivates EIF2AK3/PERK in unstressed cells. Accumulation of misfolded protein in the endoplasmic reticulum causes release of HSPA5/BiP from ERN1/IRE1 and EIF2AK3/PERK, allowing their homodimerization and subsequent activation. Plays an auxiliary role in post-translational transport of small presecretory proteins across endoplasmic reticulum (ER). May function as an allosteric modulator for SEC61 channel-forming translocon complex, likely cooperating with SEC62 to enable the productive insertion of these precursors into SEC61 channel. Appears to specifically regulate translocation of precursors having inhibitory residues in their mature region that weaken channel gating. May also play a role in apoptosis and cell proliferation. In Pongo abelii (Sumatran orangutan), this protein is Endoplasmic reticulum chaperone BiP.